Here is a 198-residue protein sequence, read N- to C-terminus: Small ribosomal subunit protein uS4 (198 aa).

Residues 26–45 (LKKRPYAPGQHGQRRSKLSN) are disordered. Residues 91 to 154 (SRLDNVVYRL…KNLTIVKEAL (64 aa)) form the S4 RNA-binding domain.

The protein belongs to the universal ribosomal protein uS4 family. In terms of assembly, part of the 30S ribosomal subunit. Contacts protein S5. The interaction surface between S4 and S5 is involved in control of translational fidelity.

One of the primary rRNA binding proteins, it binds directly to 16S rRNA where it nucleates assembly of the body of the 30S subunit. Its function is as follows. With S5 and S12 plays an important role in translational accuracy. This Acholeplasma laidlawii (strain PG-8A) protein is Small ribosomal subunit protein uS4.